Reading from the N-terminus, the 443-residue chain is Trigger factor (443 aa).

A PPIase FKBP-type domain is found at 163–249; the sequence is KDAAIIDYQA…LKSLKEEILP (87 aa).

This sequence belongs to the FKBP-type PPIase family. Tig subfamily.

The protein localises to the cytoplasm. The catalysed reaction is [protein]-peptidylproline (omega=180) = [protein]-peptidylproline (omega=0). Involved in protein export. Acts as a chaperone by maintaining the newly synthesized protein in an open conformation. Functions as a peptidyl-prolyl cis-trans isomerase. The polypeptide is Trigger factor (Desulfosudis oleivorans (strain DSM 6200 / JCM 39069 / Hxd3) (Desulfococcus oleovorans)).